A 282-amino-acid chain; its full sequence is Elongation factor Ts (282 aa).

Positions 80–83 (TDFV) are involved in Mg(2+) ion dislocation from EF-Tu.

It belongs to the EF-Ts family.

It is found in the cytoplasm. Functionally, associates with the EF-Tu.GDP complex and induces the exchange of GDP to GTP. It remains bound to the aminoacyl-tRNA.EF-Tu.GTP complex up to the GTP hydrolysis stage on the ribosome. This chain is Elongation factor Ts (tsf), found in Pasteurella multocida (strain Pm70).